Reading from the N-terminus, the 136-residue chain is Protein NrdI (136 aa).

This sequence belongs to the NrdI family.

Functionally, probably involved in ribonucleotide reductase function. In Salmonella newport (strain SL254), this protein is Protein NrdI.